The chain runs to 532 residues: UDP-N-acetylmuramyl-tripeptide synthetase (532 aa).

Ser34 is a binding site for UDP-N-acetyl-alpha-D-muramoyl-L-alanyl-D-glutamate. ATP is bound at residue 127 to 133 (GTEGKSS). UDP-N-acetyl-alpha-D-muramoyl-L-alanyl-D-glutamate-binding positions include 171–172 (TT), Ser198, and Arg208. Lys240 is subject to N6-carboxylysine.

It belongs to the MurCDEF family. MurE subfamily. In terms of processing, carboxylation is probably crucial for Mg(2+) binding and, consequently, for the gamma-phosphate positioning of ATP.

It localises to the cytoplasm. It participates in cell wall biogenesis; peptidoglycan biosynthesis. Its function is as follows. Catalyzes the addition of an amino acid to the nucleotide precursor UDP-N-acetylmuramoyl-L-alanyl-D-glutamate (UMAG) in the biosynthesis of bacterial cell-wall peptidoglycan. The chain is UDP-N-acetylmuramyl-tripeptide synthetase from Treponema denticola (strain ATCC 35405 / DSM 14222 / CIP 103919 / JCM 8153 / KCTC 15104).